The chain runs to 64 residues: Large ribosomal subunit protein bL35c (64 aa).

The protein belongs to the bacterial ribosomal protein bL35 family.

It localises to the plastid. It is found in the chloroplast. This chain is Large ribosomal subunit protein bL35c, found in Thalassiosira pseudonana (Marine diatom).